We begin with the raw amino-acid sequence, 278 residues long: Large ribosomal subunit protein uL2 (278 aa).

The interval 211–278 (KRWLGKRPQS…LIIRRRKGSK (68 aa)) is disordered. Residues 258–270 (KTRDTKKASEKLI) show a composition bias toward basic and acidic residues.

The protein belongs to the universal ribosomal protein uL2 family. Part of the 50S ribosomal subunit. Forms a bridge to the 30S subunit in the 70S ribosome.

Functionally, one of the primary rRNA binding proteins. Required for association of the 30S and 50S subunits to form the 70S ribosome, for tRNA binding and peptide bond formation. It has been suggested to have peptidyltransferase activity; this is somewhat controversial. Makes several contacts with the 16S rRNA in the 70S ribosome. This chain is Large ribosomal subunit protein uL2, found in Lactobacillus helveticus (strain DPC 4571).